The sequence spans 312 residues: uncharacterized protein (312 aa).

Disordered stretches follow at residues 1–26 (MQKDIGRRFQRNKKKINSKPGGAMVA) and 45–106 (GNLQ…LPSG). Residues 8 to 17 (RFQRNKKKIN) are compositionally biased toward basic residues. Residues 68–77 (NGKRNGDKVR) show a composition bias toward basic and acidic residues. Positions 85 to 103 (GHSSYAGSRISGGNSNSHL) are enriched in polar residues.

This is an uncharacterized protein from Schizosaccharomyces pombe (strain 972 / ATCC 24843) (Fission yeast).